The primary structure comprises 143 residues: Small ribosomal subunit protein eS19y (143 aa).

The protein belongs to the eukaryotic ribosomal protein eS19 family.

This is Small ribosomal subunit protein eS19y (RPS19B) from Arabidopsis thaliana (Mouse-ear cress).